A 783-amino-acid polypeptide reads, in one-letter code: Cadherin-5 (783 aa).

Residues 1-25 form the signal peptide; the sequence is MQALVMLLATGATYYLGLLAAAAAA. The propeptide occupies 26–45; the sequence is VNPGRPNTPGSLPAHRRQKR. Cadherin domains are found at residues 44 to 149, 150 to 256, 257 to 371, 372 to 478, and 478 to 585; these read KRDW…WPVF, THRV…FPIF, TQNR…PPIF, QQPF…APEF, and FAKP…GEFT. Topologically, residues 46 to 599 are extracellular; sequence DWIWNQMHID…AAAQVGISIQ (554 aa). 2 residues coordinate Ca(2+): Glu56 and Glu57. N-linked (GlcNAc...) asparagine glycosylation is present at Asn59. Residues Asp107, Glu109, Asp141, Val142, Asn143, Asp144, and Asn145 each coordinate Ca(2+). Asn155 carries an N-linked (GlcNAc...) asparagine glycan. Residues Asp175, Asp177, His184, and Asp229 each contribute to the Ca(2+) site. Residues Asn361, Asn441, and Asn523 are each glycosylated (N-linked (GlcNAc...) asparagine). A helical transmembrane segment spans residues 600-620; that stretch reads ALVAIFLCILTFTVITLLIIL. Residues 621–660 are required for interaction with PALS1; that stretch reads RRRLRKQARAHGKSVPEIHEQLVTYDEEGGGEMDTTSYDV. The Cytoplasmic portion of the chain corresponds to 621–783; that stretch reads RRRLRKQARA…GSDPQEELVY (163 aa).

As to quaternary structure, part of a complex composed of AMOTL2, MAGI1 and CDH5, within the complex AMOTL2 acts as a scaffold protein for the interaction of MAGI1 with CDH5. The complex is required for coupling actin fibers to cell junctions in endothelial cells. Within the complex AMOTL2 (via its N-terminus) interacts with CDH5. Interacts (via cadherin 5 domain) with PTPRB. Interacts with TRPC4. Interacts with KRIT1. Interacts with PARD3. Interacts with RTN4 (isoform B). Interacts with PALS1; the interaction promotes PALS1 localization to cell junctions and is required for CDH5-mediated vascular lumen formation and endothelial cell. Interacts with CTNND1/p120-catenin; the interaction controls CADH5 endocytosis. Phosphorylated on tyrosine residues by KDR/VEGFR-2. Dephosphorylated by PTPRB. Post-translationally, O-glycosylated.

It is found in the cell junction. It localises to the adherens junction. The protein resides in the cell membrane. The protein localises to the cytoplasm. Its function is as follows. Cadherins are calcium-dependent cell adhesion proteins. They preferentially interact with themselves in a homophilic manner in connecting cells; cadherins may thus contribute to the sorting of heterogeneous cell types. This cadherin may play a important role in endothelial cell biology through control of the cohesion and organization of the intercellular junctions. It associates with alpha-catenin forming a link to the cytoskeleton. Plays a role in coupling actin fibers to cell junctions in endothelial cells, via acting as a cell junctional complex anchor for AMOTL2 and MAGI1. Acts in concert with KRIT1 and PALS1 to establish and maintain correct endothelial cell polarity and vascular lumen. These effects are mediated by recruitment and activation of the Par polarity complex and RAP1B. Required for activation of PRKCZ and for localization of phosphorylated PRKCZ, PARD3, TIAM1 and RAP1B to the cell junction. Associates with CTNND1/p120-catenin to control CADH5 endocytosis. This is Cadherin-5 from Bos taurus (Bovine).